Here is an 86-residue protein sequence, read N- to C-terminus: MATKKAGGSSRNGRDSAGRRLGIKKSDGQYVIPGNIIVRQRGTKVHPGINVGLGKDHTIFSLIEGRVEFLTKQNHKIVNVKEIANV.

The disordered stretch occupies residues 1 to 26 (MATKKAGGSSRNGRDSAGRRLGIKKS).

The protein belongs to the bacterial ribosomal protein bL27 family.

This is Large ribosomal subunit protein bL27 from Rickettsia typhi (strain ATCC VR-144 / Wilmington).